Reading from the N-terminus, the 400-residue chain is Protein TFG (400 aa).

N-acetylmethionine is present on M1. The 82-residue stretch at 10 to 91 (KLIIKAQLGE…RILKLTLFVN (82 aa)) folds into the PB1 domain. S50 carries the post-translational modification Phosphoserine. The stretch at 97-124 (LESSQVKYLRRELIELRNKVNRLLDSLE) forms a coiled coil. Disordered stretches follow at residues 120 to 160 (LDSL…STQV) and 187 to 400 (LTDD…PGYR). The segment covering 150–160 (SDSSGKQSTQV) has biased composition (polar residues). A Phosphoserine modification is found at S197. 3 stretches are compositionally biased toward low complexity: residues 237 to 258 (GQIE…AQQP), 265 to 298 (PQQY…PTSQ), and 307 to 327 (QPQQ…YPAQ). Residues 328–340 (TYTAQTSQPTNYT) are compositionally biased toward polar residues. Omega-N-methylarginine occurs at positions 385 and 400.

Self-associates to form an oligomeric complex. Interacts with PDCD6; promoting localization and polymerization of TFG at endoplasmic reticulum exit site. Interacts with SEC16B. In terms of tissue distribution, ubiquitous.

The protein localises to the endoplasmic reticulum. Plays a role in the normal dynamic function of the endoplasmic reticulum (ER) and its associated microtubules. Required for secretory cargo traffic from the endoplasmic reticulum to the Golgi apparatus. The protein is Protein TFG (TFG) of Homo sapiens (Human).